Reading from the N-terminus, the 496-residue chain is Squalene epoxidase ERG1 (496 aa).

Residues 4-24 traverse the membrane as a helical segment; it reads VKYDAIIIGAGVIGPTIATAF. Residues 15 to 16, 35 to 36, R43, R148, V164, D332, and M345 contribute to the FAD site; these read VI and ER. 2 helical membrane-spanning segments follow: residues 431–451 and 466–486; these read IGLL…FFSV and LGFP…IVIF.

This sequence belongs to the squalene monooxygenase family. The cofactor is FAD.

Its subcellular location is the microsome membrane. It is found in the endoplasmic reticulum membrane. It carries out the reaction squalene + reduced [NADPH--hemoprotein reductase] + O2 = (S)-2,3-epoxysqualene + oxidized [NADPH--hemoprotein reductase] + H2O + H(+). Its pathway is terpene metabolism; lanosterol biosynthesis; lanosterol from farnesyl diphosphate: step 2/3. Activity is completely abolished by Triton X-100, deoxycholate or Cu(2+), and partially inhibited by thiol reagents, rotenone and antimycin A. The allylamine antimycotic agents naftifine and SF 86-327are potent inhibitors and show apparently non-competitive kinetics with respect to the substrate squalene. Functionally, squalene epoxidase; part of the third module of ergosterol biosynthesis pathway that includes the late steps of the pathway. Erg1 catalyzes the epoxidation of squalene into 2,3-epoxysqualene. The third module or late pathway involves the ergosterol synthesis itself through consecutive reactions that mainly occur in the endoplasmic reticulum (ER) membrane. Firstly, the squalene synthase ERG9 catalyzes the condensation of 2 farnesyl pyrophosphate moieties to form squalene, which is the precursor of all steroids. Squalene synthase is crucial for balancing the incorporation of farnesyl diphosphate (FPP) into sterol and nonsterol isoprene synthesis. Secondly, the squalene epoxidase ERG1 catalyzes the stereospecific oxidation of squalene to (S)-2,3-epoxysqualene, which is considered to be a rate-limiting enzyme in steroid biosynthesis. Then, the lanosterol synthase ERG7 catalyzes the cyclization of (S)-2,3 oxidosqualene to lanosterol, a reaction that forms the sterol core. In the next steps, lanosterol is transformed to zymosterol through a complex process involving various demethylation, reduction and desaturation reactions. The lanosterol 14-alpha-demethylase ERG11 (also known as CYP51) catalyzes C14-demethylation of lanosterol to produce 4,4'-dimethyl cholesta-8,14,24-triene-3-beta-ol, which is critical for ergosterol biosynthesis. The C-14 reductase ERG24 reduces the C14=C15 double bond of 4,4-dimethyl-cholesta-8,14,24-trienol to produce 4,4-dimethyl-cholesta-8,24-dienol. 4,4-dimethyl-cholesta-8,24-dienol is substrate of the C-4 demethylation complex ERG25-ERG26-ERG27 in which ERG25 catalyzes the three-step monooxygenation required for the demethylation of 4,4-dimethyl and 4alpha-methylsterols, ERG26 catalyzes the oxidative decarboxylation that results in a reduction of the 3-beta-hydroxy group at the C-3 carbon to an oxo group, and ERG27 is responsible for the reduction of the keto group on the C-3. ERG28 has a role as a scaffold to help anchor ERG25, ERG26 and ERG27 to the endoplasmic reticulum and ERG29 regulates the activity of the iron-containing C4-methylsterol oxidase ERG25. Then, the sterol 24-C-methyltransferase ERG6 catalyzes the methyl transfer from S-adenosyl-methionine to the C-24 of zymosterol to form fecosterol. The C-8 sterol isomerase ERG2 catalyzes the reaction which results in unsaturation at C-7 in the B ring of sterols and thus converts fecosterol to episterol. The sterol-C5-desaturase ERG3 then catalyzes the introduction of a C-5 double bond in the B ring to produce 5-dehydroepisterol. The C-22 sterol desaturase ERG5 further converts 5-dehydroepisterol into ergosta-5,7,22,24(28)-tetraen-3beta-ol by forming the C-22(23) double bond in the sterol side chain. Finally, ergosta-5,7,22,24(28)-tetraen-3beta-ol is substrate of the C-24(28) sterol reductase ERG4 to produce ergosterol. The polypeptide is Squalene epoxidase ERG1 (Candida albicans (strain SC5314 / ATCC MYA-2876) (Yeast)).